The sequence spans 385 residues: Deoxyguanosinetriphosphate triphosphohydrolase-like protein (385 aa).

The region spanning arginine 75–asparagine 204 is the HD domain.

The protein belongs to the dGTPase family. Type 2 subfamily.

The protein is Deoxyguanosinetriphosphate triphosphohydrolase-like protein of Geobacter sulfurreducens (strain ATCC 51573 / DSM 12127 / PCA).